Consider the following 94-residue polypeptide: Phosphoribosyl-ATP pyrophosphatase (94 aa).

This sequence belongs to the PRA-PH family.

The protein localises to the cytoplasm. It carries out the reaction 1-(5-phospho-beta-D-ribosyl)-ATP + H2O = 1-(5-phospho-beta-D-ribosyl)-5'-AMP + diphosphate + H(+). It participates in amino-acid biosynthesis; L-histidine biosynthesis; L-histidine from 5-phospho-alpha-D-ribose 1-diphosphate: step 2/9. In Pyrobaculum islandicum (strain DSM 4184 / JCM 9189 / GEO3), this protein is Phosphoribosyl-ATP pyrophosphatase.